Here is a 502-residue protein sequence, read N- to C-terminus: ATP synthase subunit alpha (502 aa).

Residues 115-137 are disordered; that stretch reads VDGLGPVETTETRPIESPAPGVM. 169–176 contacts ATP; the sequence is GDRQTGKT.

Belongs to the ATPase alpha/beta chains family. As to quaternary structure, F-type ATPases have 2 components, CF(1) - the catalytic core - and CF(0) - the membrane proton channel. CF(1) has five subunits: alpha(3), beta(3), gamma(1), delta(1), epsilon(1). CF(0) has three main subunits: a(1), b(2) and c(9-12). The alpha and beta chains form an alternating ring which encloses part of the gamma chain. CF(1) is attached to CF(0) by a central stalk formed by the gamma and epsilon chains, while a peripheral stalk is formed by the delta and b chains.

It is found in the cell membrane. The catalysed reaction is ATP + H2O + 4 H(+)(in) = ADP + phosphate + 5 H(+)(out). In terms of biological role, produces ATP from ADP in the presence of a proton gradient across the membrane. The alpha chain is a regulatory subunit. In Geobacillus stearothermophilus (Bacillus stearothermophilus), this protein is ATP synthase subunit alpha.